The primary structure comprises 287 residues: MKSFVKPERDSLLRTVRIVFTDPDATDDSSSSSDEWLPKPRKVKRFVHEITFLPQVSESSQDRSNAVKTPRRKSTRQFKYPVGVRPRPSGKFAAEILNPFTKTKKWLGTYETPAEAEKAYVDKKVEYDALASSGSAVSSSVVTVTSQCLRSPTSASVSCVSADDLSKEKTSLNKDVAASGDSTTKEVFTTFDFSDVKIPDLRFLAAEEDSMVSNANGAELDFDCFLTDSNILLDDYSLLENDINFSRFENSLPSELPDCDFTEMEFQLDDFKFAYTDHLTTPPLGLV.

Residues Tyr80 to Ser140 constitute a DNA-binding region (AP2/ERF).

It belongs to the AP2/ERF transcription factor family. ERF subfamily.

The protein localises to the nucleus. In terms of biological role, probably acts as a transcriptional activator. Binds to the GCC-box pathogenesis-related promoter element. May be involved in the regulation of gene expression by stress factors and by components of stress signal transduction pathways. This is Ethylene-responsive transcription factor ERF116 (ERF116) from Arabidopsis thaliana (Mouse-ear cress).